A 204-amino-acid chain; its full sequence is Bombinin-like peptides 1 (204 aa).

Positions 1–16 (MNFKYIVAVSILIASA) form a signal peptide, or 18. An asparagine amide mark is found at Asn-70 and Asn-133.

This sequence belongs to the bombinin family. As to expression, expressed by the skin glands.

It is found in the secreted. Functionally, has antimicrobial activity, but no hemolytic activity. Preference on killing Gram-negative non-enteric bacteria. This chain is Bombinin-like peptides 1, found in Bombina orientalis (Oriental fire-bellied toad).